We begin with the raw amino-acid sequence, 117 residues long: MDKKSARIRRATRARRKLKELGATRLVVHRTPRHIYAQVIAPNGSEVLVAASTVEKAITEQLKYTGNKDAAAAVGKAVAERALEKGIKVVSFDRSGFQYHGRVQALADAAREAGLQF.

The protein belongs to the universal ribosomal protein uL18 family. Part of the 50S ribosomal subunit; part of the 5S rRNA/L5/L18/L25 subcomplex. Contacts the 5S and 23S rRNAs.

In terms of biological role, this is one of the proteins that bind and probably mediate the attachment of the 5S RNA into the large ribosomal subunit, where it forms part of the central protuberance. The protein is Large ribosomal subunit protein uL18 of Enterobacter sp. (strain 638).